A 164-amino-acid polypeptide reads, in one-letter code: Putative L,D-transpeptidase YkuD (164 aa).

A LysM domain is found at 2–45 (LTYQVKQGDTLNSIAADFRISTAALLQANPSLQAGLTAGQSIVI). The 108-residue stretch at 56–163 (YHIAVSIGAK…VPNGTRVTIN (108 aa)) folds into the L,D-TPase catalytic domain. Catalysis depends on His123, which acts as the Proton donor/acceptor. The active-site Nucleophile is the Cys139.

It belongs to the YkuD family. As to quaternary structure, monomer.

The protein localises to the spore wall. The protein operates within cell wall biogenesis; peptidoglycan biosynthesis. Probable enzyme that may play an important role in cell wall biology. In Bacillus subtilis (strain 168), this protein is Putative L,D-transpeptidase YkuD (ykuD).